We begin with the raw amino-acid sequence, 245 residues long: 8-amino-3,8-dideoxy-manno-octulosonate cytidylyltransferase (245 aa).

It belongs to the KdsB family.

Its subcellular location is the cytoplasm. The enzyme catalyses 8-amino-3,8-dideoxy-alpha-D-manno-octulosonate + CTP = CMP-8-amino-3,8-dideoxy-alpha-D-manno-oct-2-ulosonate + diphosphate. Its pathway is bacterial outer membrane biogenesis; lipopolysaccharide biosynthesis. Its function is as follows. Activates KDO8N (a required 8-carbon sugar) for incorporation into bacterial lipopolysaccharide in the Shewanella genus. In Shewanella sp. (strain W3-18-1), this protein is 8-amino-3,8-dideoxy-manno-octulosonate cytidylyltransferase.